The sequence spans 452 residues: GATA-binding factor 2 (452 aa).

A disordered region spans residues 130 to 182; that stretch reads GGSLYPGTGSSACPSSSHSSPHLFGFPPTPPKDVSPDPGPASPPSSSRLEDKD. Low complexity predominate over residues 139–151; that stretch reads SSACPSSSHSSPH. Positions 156-172 are enriched in pro residues; that stretch reads PPTPPKDVSPDPGPASP. GATA-type zinc fingers lie at residues 267–291 and 321–345; these read CVNCGATATPLWRRDGTGHYLCNAC and CANCQTSTTTLWRRNANGDPVCNAC. Positions 426–438 are enriched in polar residues; sequence QTPTPIHPSSSLS. The interval 426–452 is disordered; that stretch reads QTPTPIHPSSSLSFGHPHHSSMVTAMG.

As to expression, expressed in the developing ventral blood island, and in the embryonic nervous system.

The protein localises to the nucleus. The polypeptide is GATA-binding factor 2 (gata2) (Xenopus laevis (African clawed frog)).